The sequence spans 401 residues: Mitochondrial distribution and morphology protein 12 (401 aa).

The SMP-LTD domain occupies 1-401 (MSIDINWDTL…VYPSFWTFLV (401 aa)). Acidic residues predominate over residues 70-88 (YEEDEDYPDNEDDDDDEAG). 2 disordered regions span residues 70 to 95 (YEEDEDYPDNEDDDDDEAGLDSNPRN) and 190 to 247 (SLTL…EKSP). Low complexity predominate over residues 195–205 (PQSHPDPSSRP). Residues 209 to 220 (HQHDDERRRSLA) are compositionally biased toward basic and acidic residues.

It belongs to the MDM12 family. Component of the ER-mitochondria encounter structure (ERMES) or MDM complex, composed of MMM1, MDM10, MDM12 and MDM34. An MMM1 homodimer associates with one molecule of MDM12 on each side in a pairwise head-to-tail manner, and the SMP-LTD domains of MMM1 and MDM12 generate a continuous hydrophobic tunnel for phospholipid trafficking.

Its subcellular location is the mitochondrion outer membrane. The protein resides in the endoplasmic reticulum membrane. Its function is as follows. Component of the ERMES/MDM complex, which serves as a molecular tether to connect the endoplasmic reticulum (ER) and mitochondria. Components of this complex are involved in the control of mitochondrial shape and protein biogenesis, and function in nonvesicular lipid trafficking between the ER and mitochondria. MDM12 is required for the interaction of the ER-resident membrane protein MMM1 and the outer mitochondrial membrane-resident beta-barrel protein MDM10. The MDM12-MMM1 subcomplex functions in the major beta-barrel assembly pathway that is responsible for biogenesis of all mitochondrial outer membrane beta-barrel proteins, and acts in a late step after the SAM complex. The MDM10-MDM12-MMM1 subcomplex further acts in the TOM40-specific pathway after the action of the MDM12-MMM1 complex. Essential for establishing and maintaining the structure of mitochondria and maintenance of mtDNA nucleoids. The sequence is that of Mitochondrial distribution and morphology protein 12 from Phaeosphaeria nodorum (strain SN15 / ATCC MYA-4574 / FGSC 10173) (Glume blotch fungus).